We begin with the raw amino-acid sequence, 423 residues long: UDP-N-acetylglucosamine 1-carboxyvinyltransferase 2 (423 aa).

23 to 24 contacts phosphoenolpyruvate; that stretch reads KN. Arg95 contributes to the UDP-N-acetyl-alpha-D-glucosamine binding site. Residue Cys119 is the Proton donor of the active site. Cys119 is subject to 2-(S-cysteinyl)pyruvic acid O-phosphothioketal. Positions 306 and 328 each coordinate UDP-N-acetyl-alpha-D-glucosamine.

The protein belongs to the EPSP synthase family. MurA subfamily.

It localises to the cytoplasm. The enzyme catalyses phosphoenolpyruvate + UDP-N-acetyl-alpha-D-glucosamine = UDP-N-acetyl-3-O-(1-carboxyvinyl)-alpha-D-glucosamine + phosphate. It participates in cell wall biogenesis; peptidoglycan biosynthesis. Cell wall formation. Adds enolpyruvyl to UDP-N-acetylglucosamine. The sequence is that of UDP-N-acetylglucosamine 1-carboxyvinyltransferase 2 from Symbiobacterium thermophilum (strain DSM 24528 / JCM 14929 / IAM 14863 / T).